The primary structure comprises 33 residues: U-limacoditoxin(13)-As11 (33 aa).

An N-terminal signal peptide occupies residues methionine 1 to alanine 19. Position 32 is a phenylalanine amide (phenylalanine 32).

Belongs to the FARP (FMRFamide related peptide) family. As to expression, expressed by the venom secretory cell of the spine. The spine is a cuticular structure containing a single large nucleated venom-secreting cell at its base. It is an independent unit capable of producing, storing and injecting venom. On the back of A.stimulea caterpillars, spines are grouped together by 50 to 100 to form scoli, of which there are eight.

The protein localises to the secreted. Is toxic when injected into Drosophila melanogaster. Also shows a low anthelmintic activity against the parasitic nematode H.contortus (drug susceptible Kirby isolate). The protein is U-limacoditoxin(13)-As11 of Acharia stimulea (Saddleback caterpillar moth).